We begin with the raw amino-acid sequence, 95 residues long: Large ribosomal subunit protein bL27 (95 aa).

Residues 1 to 9 (MLNMNLQFF) constitute a propeptide that is removed on maturation.

Belongs to the bacterial ribosomal protein bL27 family. The N-terminus is cleaved by ribosomal processing cysteine protease Prp.

The sequence is that of Large ribosomal subunit protein bL27 from Agathobacter rectalis (strain ATCC 33656 / DSM 3377 / JCM 17463 / KCTC 5835 / VPI 0990) (Eubacterium rectale).